The sequence spans 378 residues: Putative F-box only protein 15 (378 aa).

The region spanning 5 to 52 (KRVYRSLPFELVEEILKKTPAESLNRFKSTCKQWYGIITSKRFMYNHL) is the F-box domain.

This Arabidopsis thaliana (Mouse-ear cress) protein is Putative F-box only protein 15 (FBX15).